The primary structure comprises 80 residues: Exodeoxyribonuclease 7 small subunit (80 aa).

Belongs to the XseB family. As to quaternary structure, heterooligomer composed of large and small subunits.

The protein localises to the cytoplasm. It catalyses the reaction Exonucleolytic cleavage in either 5'- to 3'- or 3'- to 5'-direction to yield nucleoside 5'-phosphates.. Functionally, bidirectionally degrades single-stranded DNA into large acid-insoluble oligonucleotides, which are then degraded further into small acid-soluble oligonucleotides. The sequence is that of Exodeoxyribonuclease 7 small subunit from Pseudoalteromonas translucida (strain TAC 125).